The primary structure comprises 185 residues: Ribosome-recycling factor (185 aa).

The protein belongs to the RRF family.

The protein resides in the cytoplasm. In terms of biological role, responsible for the release of ribosomes from messenger RNA at the termination of protein biosynthesis. May increase the efficiency of translation by recycling ribosomes from one round of translation to another. The protein is Ribosome-recycling factor of Streptococcus pyogenes serotype M28 (strain MGAS6180).